The sequence spans 469 residues: ATP-dependent protease ATPase subunit HslU (469 aa).

Residues I24, 66–71 (GVGKTE), D282, E347, and R419 each bind ATP.

This sequence belongs to the ClpX chaperone family. HslU subfamily. In terms of assembly, a double ring-shaped homohexamer of HslV is capped on each side by a ring-shaped HslU homohexamer. The assembly of the HslU/HslV complex is dependent on binding of ATP.

It localises to the cytoplasm. Its function is as follows. ATPase subunit of a proteasome-like degradation complex; this subunit has chaperone activity. The binding of ATP and its subsequent hydrolysis by HslU are essential for unfolding of protein substrates subsequently hydrolyzed by HslV. HslU recognizes the N-terminal part of its protein substrates and unfolds these before they are guided to HslV for hydrolysis. This is ATP-dependent protease ATPase subunit HslU from Listeria monocytogenes serovar 1/2a (strain ATCC BAA-679 / EGD-e).